The sequence spans 617 residues: MQVLLARLACPVYQCFHAIKIKKNYLPLCATRWSSTSVVPRITTHYTVYPRDQDKRWEGVNMERFAEEADVVIVGAGPAGLSAAARLKQLAAQHEKDIRVCLVEKAAQIGAHTLSGACLDPRALQELFPDWKEKGAPLNTPVTEDRFGILTEKYRIPVPILPGLPMNNHGNYIVRLGHLVSWMGEQAEALGVEVYPGYAAAEVLFHEDGSVKGIATNDVGIQKDGAPKTTFERGLELHAKVTIFAEGCHGHLAKQLYRKFDLRANCEPQTYGIGLKELWVIDEKKWKPGRVDHTVGWPLDRHTYGGSFLYHLNEGEPLVALGFVVGLDYQNPYLSPFREFQRWKHHPSIQPTLEGGKRIAYGARALNEGGLQCIPKLTFPGGLLIGCSPGFMNVPKIKGTHTAMKSGILAAESIFNQLTNENLQSKTIGLDVTEYEDNLKKSWVWKELYAVRNIRPSCHSILGVYGGMIYTGIFYWIFRGMEPWTLKHKGSDSDKLKPAKDCTPIEYPKPDGQISFDLLSSVALSGTNHEHDQPAHLTLKDDSVPVNRNLSIYDGPEQRFCPAGVYEFVPVEQGDGFRLQINAQNCVHCKTCDIKDPSQNINWVVPEGGGGPAYNGM.

A mitochondrion-targeting transit peptide spans 1-33 (MQVLLARLACPVYQCFHAIKIKKNYLPLCATRW). An FAD-binding site is contributed by 71–85 (VVIVGAGPAGLSAAA). Lysine 96 is modified (N6-acetyllysine). Residues 109–130 (IGAHTLSGACLDPRALQELFPD) lie within the membrane without spanning it. N6-acetyllysine is present on residues lysine 132 and lysine 223. Glycine 305 and glycine 306 together coordinate a ubiquinone. Lysine 357 is subject to N6-acetyllysine. The stretch at 428–447 (IGLDVTEYEDNLKKSWVWKE) is an intramembrane region. Phosphoserine is present on serine 551. Residues cysteine 561, cysteine 586, cysteine 589, and cysteine 592 each coordinate [4Fe-4S] cluster. The 4Fe-4S ferredoxin-type domain occupies 577 to 606 (FRLQINAQNCVHCKTCDIKDPSQNINWVVP).

Belongs to the ETF-QO/FixC family. In terms of assembly, monomer. [4Fe-4S] cluster is required as a cofactor. It depends on FAD as a cofactor.

It is found in the mitochondrion inner membrane. The enzyme catalyses a ubiquinone + reduced [electron-transfer flavoprotein] = a ubiquinol + oxidized [electron-transfer flavoprotein] + H(+). Its function is as follows. Accepts electrons from ETF and reduces ubiquinone. This chain is Electron transfer flavoprotein-ubiquinone oxidoreductase, mitochondrial (ETFDH), found in Bos taurus (Bovine).